The sequence spans 789 residues: Cell pattern formation-associated protein stuA (789 aa).

Disordered stretches follow at residues 50-131 (PALS…NTVG) and 205-224 (PGGV…SVSS). 3 stretches are compositionally biased toward polar residues: residues 55–69 (PTAS…SYRT), 76–88 (ASHN…SLSG), and 115–131 (LDSS…NTVG). The HTH APSES-type domain maps to 272-378 (RVTATLWEDE…HNIGGLLYHP (107 aa)). The H-T-H motif DNA-binding region spans 306–327 (GTKLLNVAGMTRGRRDGILKSE). 3 disordered regions span residues 389-459 (QESQ…ASSL), 487-543 (SIDT…YAPQ), and 616-789 (HDSA…ARRR). 5 stretches are compositionally biased toward polar residues: residues 419 to 438 (LQTP…SQSA), 487 to 529 (SIDT…SKSY), 620 to 636 (GYNT…NPSV), 645 to 667 (QLAS…TPRT), and 676 to 713 (SGYN…SVAS). Positions 731–758 (KRMREDDDVDQIVRPDSRGAEYESKRRK) are nuclear localization domain. A compositionally biased stretch (basic and acidic residues) spans 741–754 (QIVRPDSRGAEYES).

Belongs to the EFG1/PHD1/stuA family.

The protein resides in the nucleus. In terms of biological role, transcription factor that regulates asexual reproduction. Binds the StuA-response elements (StRE) with the consensus sequence 5'-(A/T)CGCG(T/A)N(A/C)-3' at the promoters of target genes. The sequence is that of Cell pattern formation-associated protein stuA from Aspergillus flavus (strain ATCC 200026 / FGSC A1120 / IAM 13836 / NRRL 3357 / JCM 12722 / SRRC 167).